The following is a 99-amino-acid chain: Small ribosomal subunit protein bS20 (99 aa).

This sequence belongs to the bacterial ribosomal protein bS20 family.

In terms of biological role, binds directly to 16S ribosomal RNA. The sequence is that of Small ribosomal subunit protein bS20 from Picosynechococcus sp. (strain ATCC 27264 / PCC 7002 / PR-6) (Agmenellum quadruplicatum).